The chain runs to 90 residues: Probable acyl carrier protein (90 aa).

In terms of domain architecture, Carrier spans 9–90 (QVTVEELSAL…LVNGALKTGV (82 aa)). Residue Ser-47 is modified to O-(pantetheine 4'-phosphoryl)serine.

4'-phosphopantetheine is transferred from CoA to a specific serine of the apo-ACP-like protein.

Its function is as follows. Involved in developmentally regulated synthesis of a compound biosynthetically related to polyketide antibiotics which is essential for spore color in Streptomyces coelicolor. The protein is Probable acyl carrier protein of Streptomyces coelicolor (strain ATCC BAA-471 / A3(2) / M145).